The following is a 740-amino-acid chain: MEACNCFEPQWPADDLLMKYQYISDFFIAVAYFSIPLELIYFVKKSAVFPYKWVLVQFGAFIVLCGATHLINLWTFNLHTRTVEIVMTTAKLMTAAVSCVTALMLVHIIPDLLSVKTRELFLKNKAAELDREMGLIRTQEETGRHVRMLTHEIRSTLDRHTILKTTLVELGRTLGLEECALWMPTRTGLELQLSHTLRQQNPVGYTVPIHLPVLNQVFSSNRAIKISPNSPIARLRPLAGKYVPGEVVAVRVPLLHLSNFQINDWPELSTKRYAMMVLMLPSDSARQWHVHELELVEVVADQVAVALSHAAILEESMRARDLLMEQNVALDMARREAETAIRARNDFLAVMNHEMRTPMHAIIALSSLLQETDLTSEQRLMVETILKSSNLLATLINDVLDLSRLEDGSLQLDIATFNLHAVFRQVFNLIKPIASVKKLFITLNVSPDLPEYVIGDEKRLVQIMLNVVGNAVKFSKEGIISVTAFVAKSESVRDPRAPDFFPVSSDNQFYMRVQVKDSGSGINPQDMPKLFTKFAQSQPVATKNSGGSGLGLAISKRFVNLMDGHIWIDSEGPSKGCTVTFVVKLGIPEGSNEPKLPLMPKVSANNSQTDFPGLKVLLMDENGISRMVTKGLLMHLGCDVTSVSSSEECLRMVSQDHKVVFMDVRVPGLDGHELAVRIHEKFMKRHERPLIVALTSNADKVTKENCLRVGMEGVILKPVSVDKMRNVLSKLLEHRILFEA.

3 consecutive transmembrane segments (helical) span residues 23–43 (ISDFFIAVAYFSIPLELIYFV), 53–73 (WVLVQFGAFIVLCGATHLINL), and 95–115 (AAVSCVTALMLVHIIPDLLSV). Residues C65 and H69 each coordinate Cu cation. One can recognise a GAF domain in the interval 158–307 (DRHTILKTTL…VVADQVAVAL (150 aa)). The 238-residue stretch at 350–587 (VMNHEMRTPM…TVTFVVKLGI (238 aa)) folds into the Histidine kinase domain. A Phosphohistidine; by autocatalysis modification is found at H353. The Response regulatory domain maps to 615 to 732 (KVLLMDENGI…KMRNVLSKLL (118 aa)). The residue at position 663 (D663) is a 4-aspartylphosphate.

It belongs to the ethylene receptor family. Homodimer; disulfide-linked. Cu cation serves as cofactor. In terms of processing, activation probably requires a transfer of a phosphate group between a His in the transmitter domain and an Asp of the receiver domain.

It localises to the endoplasmic reticulum membrane. It catalyses the reaction ATP + protein L-histidine = ADP + protein N-phospho-L-histidine.. May act early in the ethylene signal transduction pathway, possibly as an ethylene receptor, or as a regulator of the pathway. This Pelargonium hortorum (Common geranium) protein is Ethylene receptor 1 (ETR1).